The sequence spans 60 residues: Myrmicitoxin(1)-Pr4a (60 aa).

A signal peptide spans 1 to 23; it reads MKAIIFLFAVLTVVAIIIPIISG. Positions 24 to 33 are excised as a propeptide; sequence EPNAGPHAAS. Gln59 is modified (glutamine amide).

This sequence belongs to the formicidae venom clade 2 family. In terms of tissue distribution, expressed by the venom gland.

The protein resides in the secreted. Functionally, toxin that causes a rapid and irreversible paralysis when intrathoracically injected into insects (blowflies). Does not cause spontaneous nocifensive behaviors by intraplantar injection in mice. The sequence is that of Myrmicitoxin(1)-Pr4a from Pogonomyrmex rugosus (Desert harvester ant).